The sequence spans 445 residues: Histone acetyltransferase ESA1 (445 aa).

A Phosphoserine modification is found at Ser17. The region spanning 22 to 74 is the Tudor-knot domain; the sequence is IIKCQCWVQKNDEERLAEILSINTRKAPPKFYVHYVNYNKRLDEWITTDRINL. Residues 88–114 form a disordered region; that stretch reads EDNKKQKKKKATNTSETPQDSLQDGVD. The span at 99–109 shows a compositional bias: polar residues; it reads TNTSETPQDSL. In terms of domain architecture, MYST-type HAT spans 162–433; it reads ARVRNLNRII…IDPNRLIWKP (272 aa). A C2HC MYST-type; degenerate zinc finger spans residues 195 to 220; sequence IYIDDFTLQYFGSKKQYERYRKKCTL. The ESA1-RPD3 motif signature appears at 245–266; it reads RTWCRNLCLLSKLFLDHKTLYY. Lys262 is subject to N6-acetyllysine; by autocatalysis. Acetyl-CoA contacts are provided by residues 303–307 and 312–318; these read ACILT and QRMGYGK. Catalysis depends on Glu338, which acts as the Proton donor/acceptor. Residue Ser342 participates in acetyl-CoA binding.

This sequence belongs to the MYST (SAS/MOZ) family. Component of the NuA4 histone acetyltransferase complex composed of at least ACT1, ARP4, EAF3, EAF5, EAF6, EAF7, EPL1, ESA1, SWC4, TRA1, VID21, YAF9 and YNG2. The complex interacts with histones H4 (HHF1 and HHF2), H3 (HHT1 and HHT2) and H2A (HTA1 and HTA2). Autoacetylation at Lys-262 is required for proper function.

It carries out the reaction L-lysyl-[histone] + acetyl-CoA = N(6)-acetyl-L-lysyl-[histone] + CoA + H(+). It catalyses the reaction L-lysyl-[protein] + acetyl-CoA = N(6)-acetyl-L-lysyl-[protein] + CoA + H(+). The catalysed reaction is 2-hydroxyisobutanoyl-CoA + L-lysyl-[protein] = N(6)-(2-hydroxyisobutanoyl)-L-lysyl-[protein] + CoA + H(+). The enzyme catalyses (2E)-butenoyl-CoA + L-lysyl-[protein] = N(6)-(2E)-butenoyl-L-lysyl-[protein] + CoA + H(+). Its function is as follows. Catalytic component of the NuA4 histone acetyltransferase (HAT), a multiprotein complex involved in epigenetic transcriptional activation of selected genes principally by acetylation of nucleosomal histones H4, H3, H2B, H2A and H2A variant H2A.Z. Acetylates histone H4 to form H4K5ac, H4K8ac, H4K12ac and H4K16ac, histone H3 to form H3K14ac, histone H2B to form H2BK16ac, histone H2A to form H2AK4ac and H2AK7ac, and histone variant H2A.Z to form H2A.ZK14ac. Acetylation of histones gives a specific tag for epigenetic transcription initiation and elongation. Acetylation of histone H4 is essential for DNA double-strand break repair through homologous recombination. Involved in cell cycle progression. Recruitment to promoters depends on H3K4me. Also acetylates non-histone proteins, such as ATG3 and PAH1. Regulates autophagy by acetylating ATG3, controlling interaction the interaction between ATG3 and ATG8 and ATG8 lipidation. Acts as a regulator of fatty-acid-induced triacylglycerol synthesis by catalyzing acetylation of PAH1, thereby promoting the synthesis of diacylglycerol. In addition to protein acetyltransferase, can use different acyl-CoA substrates, such as 2-hydroxyisobutanoyl-CoA (2-hydroxyisobutyryl-CoA) or (2E)-butenoyl-CoA (crotonyl-CoA), and is able to mediate protein 2-hydroxyisobutyrylation and crotonylation, respectively. Catalyzes histone crotonylation. The protein is Histone acetyltransferase ESA1 of Saccharomyces cerevisiae (strain ATCC 204508 / S288c) (Baker's yeast).